The following is a 178-amino-acid chain: Probable chorismate pyruvate-lyase (178 aa).

Residues R73, L111, and E163 each coordinate substrate.

Belongs to the UbiC family.

The protein localises to the cytoplasm. The enzyme catalyses chorismate = 4-hydroxybenzoate + pyruvate. It functions in the pathway cofactor biosynthesis; ubiquinone biosynthesis. Its function is as follows. Removes the pyruvyl group from chorismate, with concomitant aromatization of the ring, to provide 4-hydroxybenzoate (4HB) for the ubiquinone pathway. The polypeptide is Probable chorismate pyruvate-lyase (Pseudomonas aeruginosa (strain UCBPP-PA14)).